A 371-amino-acid polypeptide reads, in one-letter code: 4-hydroxy-3-methylbut-2-en-1-yl diphosphate synthase (flavodoxin) (371 aa).

The [4Fe-4S] cluster site is built by Cys-272, Cys-275, Cys-307, and Glu-314.

The protein belongs to the IspG family. [4Fe-4S] cluster is required as a cofactor.

It catalyses the reaction (2E)-4-hydroxy-3-methylbut-2-enyl diphosphate + oxidized [flavodoxin] + H2O + 2 H(+) = 2-C-methyl-D-erythritol 2,4-cyclic diphosphate + reduced [flavodoxin]. It participates in isoprenoid biosynthesis; isopentenyl diphosphate biosynthesis via DXP pathway; isopentenyl diphosphate from 1-deoxy-D-xylulose 5-phosphate: step 5/6. Functionally, converts 2C-methyl-D-erythritol 2,4-cyclodiphosphate (ME-2,4cPP) into 1-hydroxy-2-methyl-2-(E)-butenyl 4-diphosphate. This chain is 4-hydroxy-3-methylbut-2-en-1-yl diphosphate synthase (flavodoxin), found in Pseudomonas aeruginosa (strain LESB58).